Here is a 254-residue protein sequence, read N- to C-terminus: Caffeoyl-CoA O-methyltransferase (254 aa).

Residues 1–25 (MATTNVEENKQTQEQQPKEIKHQEV) form a disordered region. Over residues 7 to 25 (EENKQTQEQQPKEIKHQEV) the composition is skewed to basic and acidic residues. Lysine 28 provides a ligand contact to substrate. Residues threonine 70, glutamate 92, 94–95 (GV), serine 100, aspartate 118, and alanine 147 each bind S-adenosyl-L-methionine. Aspartate 170 contacts substrate. Aspartate 170 lines the a divalent metal cation pocket. Position 172 (aspartate 172) interacts with S-adenosyl-L-methionine. The a divalent metal cation site is built by aspartate 196 and asparagine 197. Asparagine 201 is a binding site for substrate.

Belongs to the class I-like SAM-binding methyltransferase superfamily. Cation-dependent O-methyltransferase family. CCoAMT subfamily. The cofactor is a divalent metal cation.

The catalysed reaction is (E)-caffeoyl-CoA + S-adenosyl-L-methionine = (E)-feruloyl-CoA + S-adenosyl-L-homocysteine + H(+). It functions in the pathway aromatic compound metabolism; phenylpropanoid biosynthesis. Methylates caffeoyl-CoA to feruloyl-CoA and 5-hydroxyferuloyl-CoA to sinapoyl-CoA. Plays a role in the synthesis of feruloylated polysaccharides. Involved in the reinforcement of the plant cell wall. Also involved in the responding to wounding or pathogen challenge by the increased formation of cell wall-bound ferulic acid polymers. The protein is Caffeoyl-CoA O-methyltransferase of Mesembryanthemum crystallinum (Common ice plant).